The chain runs to 434 residues: Ribulose bisphosphate carboxylase-like protein (434 aa).

Lys-198, Asp-200, and Glu-201 together coordinate Mg(2+). Lys-198 carries the post-translational modification N6-carboxylysine.

This sequence belongs to the RuBisCO large chain family. Type IV subfamily. Homodimer. Mg(2+) is required as a cofactor.

May be involved in sulfur metabolism and oxidative stress response. Does not show RuBisCO activity. This chain is Ribulose bisphosphate carboxylase-like protein, found in Chlorobaculum thiosulfatiphilum (Chlorobium limicola f.sp. thiosulfatophilum).